Here is a 424-residue protein sequence, read N- to C-terminus: ATP-sensitive inward rectifier potassium channel 8 (424 aa).

At 1–69 (MLARKSIIPE…IFTTLVDLKW (69 aa)) the chain is on the cytoplasmic side. A Phosphoserine modification is found at S6. A helical membrane pass occupies residues 70-94 (RHTLVIFTMSFLCSWLLFAIMWWLV). At 95 to 126 (AFAHGDIYAYMEKGTMEKSGLESAVCVTNVRS) the chain is on the extracellular side. Residues 127–138 (FTSAFLFSIEVQ) constitute an intramembrane region (helical; Pore-forming). Residues 139 to 145 (VTIGFGG) constitute an intramembrane region (pore-forming). The Selectivity filter motif lies at 140 to 145 (TIGFGG). The Extracellular segment spans residues 146–154 (RMMTEECPL). The helical transmembrane segment at 155 to 176 (AITVLILQNIVGLIINAVMLGC) threads the bilayer. The Cytoplasmic segment spans residues 177–424 (IFMKTAQAHR…PEGNQCPSES (248 aa)). Positions 373-409 (ELSHQNSLRKRNSMRRNNSMRRNNSIRRNNSSLMVPK) are disordered. Positions 387–404 (RRNNSMRRNNSIRRNNSS) are enriched in low complexity.

Belongs to the inward rectifier-type potassium channel (TC 1.A.2.1) family. KCNJ8 subfamily. Interacts with ABCC9.

It is found in the membrane. The enzyme catalyses K(+)(in) = K(+)(out). Its function is as follows. Inward rectifier potassium channels are characterized by a greater tendency to allow potassium to flow into the cell rather than out of it. Their voltage dependence is regulated by the concentration of extracellular potassium; as external potassium is raised, the voltage range of the channel opening shifts to more positive voltages. The inward rectification is mainly due to the blockage of outward current by internal magnesium. This channel is activated by internal ATP and can be blocked by external barium. Can form a sulfonylurea-sensitive but ATP-insensitive potassium channel with ABCC9. This is ATP-sensitive inward rectifier potassium channel 8 (Kcnj8) from Mus musculus (Mouse).